A 359-amino-acid chain; its full sequence is Nicotinate-nucleotide--dimethylbenzimidazole phosphoribosyltransferase (359 aa).

The active-site Proton acceptor is the glutamate 318.

Belongs to the CobT family. As to quaternary structure, homodimer.

It carries out the reaction 5,6-dimethylbenzimidazole + nicotinate beta-D-ribonucleotide = alpha-ribazole 5'-phosphate + nicotinate + H(+). Its pathway is nucleoside biosynthesis; alpha-ribazole biosynthesis; alpha-ribazole from 5,6-dimethylbenzimidazole: step 1/2. In terms of biological role, catalyzes the synthesis of alpha-ribazole-5'-phosphate from nicotinate mononucleotide (NAMN) and 5,6-dimethylbenzimidazole (DMB). The sequence is that of Nicotinate-nucleotide--dimethylbenzimidazole phosphoribosyltransferase from Escherichia coli O17:K52:H18 (strain UMN026 / ExPEC).